We begin with the raw amino-acid sequence, 459 residues long: Autophagy-related protein 18 (459 aa).

2 WD repeats span residues methionine 1–serine 39 and alanine 188–glutamine 228. A necessary for proper localization to vacuole membrane region spans residues phenylalanine 229 to glycine 232. Residues phenylalanine 229–threonine 233 carry the L/FRRG motif motif. The WD 3 repeat unit spans residues threonine 233–threonine 272. The disordered stretch occupies residues leucine 264 to leucine 339. Over residues glycine 265 to proline 277 the composition is skewed to low complexity. The span at arginine 285–aspartate 296 shows a compositional bias: basic and acidic residues. The segment covering proline 319–arginine 330 has biased composition (gly residues). The stretch at alanine 393–glycine 433 is one WD 4 repeat.

It belongs to the WD repeat PROPPIN family. As to quaternary structure, component of the PI(3,5)P2 regulatory complex. Interacts with ATG2 and ATG9. The ATG2-ATG18 complex is essential for autophagosome formation.

It localises to the preautophagosomal structure membrane. It is found in the vacuole membrane. The protein localises to the endosome membrane. Component of the PI(3,5)P2 regulatory complex that regulates both the synthesis and turnover of phosphatidylinositol 3,5-bisphosphate (PtdIns(3,5)P2). Plays an important role in osmotically-induced vacuole fragmentation. Required for cytoplasm to vacuole transport (Cvt) vesicle formation, pexophagy and starvation-induced autophagy. Involved in correct ATG9 trafficking to the pre-autophagosomal structure. With ATG2, protects ATG8 from ATG4-mediated cleavage. Autophagy is required for proper vegetative growth, asexual/sexual reproduction, and full virulence. Autophagy is particularly involved in the biosynthesis of deoxynivalenol (DON), an important virulence determinant. This is Autophagy-related protein 18 from Gibberella zeae (strain ATCC MYA-4620 / CBS 123657 / FGSC 9075 / NRRL 31084 / PH-1) (Wheat head blight fungus).